The following is a 154-amino-acid chain: Protein X (154 aa).

The segment at 68–117 (PCALRFTSARSMETTVNAHQVLPKVLHKRTLGLSAMSTTDLEAYFKDCLF) is mitochondrial targeting sequence.

It belongs to the orthohepadnavirus protein X family. As to quaternary structure, may form homodimer. May interact with host CEBPA, CFLAR, CREB1, DDB1, E4F1, HBXIP, HSPD1/HSP60, NFKBIA, POLR2E and SMAD4. Interacts with host SMC5-SMC6 complex and induces its degradation. Interacts with host TRPC4AP; leading to prevent ubiquitination of TRPC4AP. Interacts with host PLSCR1; this interaction promotes ubiquitination and degradation of HBx and impairs HBx-mediated cell proliferation. Post-translationally, a fraction may be phosphorylated in insect cells and HepG2 cells, a human hepatoblastoma cell line. Phosphorylated in vitro by host protein kinase C or mitogen-activated protein kinase. N-acetylated in insect cells.

The protein localises to the host cytoplasm. The protein resides in the host nucleus. Its subcellular location is the host mitochondrion. In terms of biological role, multifunctional protein that plays a role in silencing host antiviral defenses and promoting viral transcription. Does not seem to be essential for HBV infection. May be directly involved in development of cirrhosis and liver cancer (hepatocellular carcinoma). Most of cytosolic activities involve modulation of cytosolic calcium. The effect on apoptosis is controversial depending on the cell types in which the studies have been conducted. May induce apoptosis by localizing in mitochondria and causing loss of mitochondrial membrane potential. May also modulate apoptosis by binding host CFLAR, a key regulator of the death-inducing signaling complex (DISC). Promotes viral transcription by using the host E3 ubiquitin ligase DDB1 to target the SMC5-SMC6 complex to proteasomal degradation. This host complex would otherwise bind to viral episomal DNA, and prevents its transcription. Moderately stimulates transcription of many different viral and cellular transcription elements. Promoters and enhancers stimulated by HBx contain DNA binding sites for NF-kappa-B, AP-1, AP-2, c-EBP, ATF/CREB, or the calcium-activated factor NF-AT. The protein is Protein X of Homo sapiens (Human).